The primary structure comprises 20 residues: Unknown protein from 2D-PAGE (20 aa).

The chain is Unknown protein from 2D-PAGE from Nicotiana tabacum (Common tobacco).